The chain runs to 507 residues: ATP synthase subunit alpha (507 aa).

Residue 168–175 coordinates ATP; the sequence is GDRQTGKT.

It belongs to the ATPase alpha/beta chains family. As to quaternary structure, F-type ATPases have 2 components, CF(1) - the catalytic core - and CF(0) - the membrane proton channel. CF(1) has five subunits: alpha(3), beta(3), gamma(1), delta(1), epsilon(1). CF(0) has three main subunits: a(1), b(2) and c(9-12). The alpha and beta chains form an alternating ring which encloses part of the gamma chain. CF(1) is attached to CF(0) by a central stalk formed by the gamma and epsilon chains, while a peripheral stalk is formed by the delta and b chains.

The protein resides in the cell membrane. The catalysed reaction is ATP + H2O + 4 H(+)(in) = ADP + phosphate + 5 H(+)(out). Functionally, produces ATP from ADP in the presence of a proton gradient across the membrane. The alpha chain is a regulatory subunit. The sequence is that of ATP synthase subunit alpha from Mesomycoplasma hyopneumoniae (strain 7448) (Mycoplasma hyopneumoniae).